The sequence spans 232 residues: Ribose-5-phosphate isomerase A (232 aa).

Residues 31–34 (TGST), 88–91 (DGAD), and 101–104 (KGGG) each bind substrate. Catalysis depends on Glu-110, which acts as the Proton acceptor. Lys-128 provides a ligand contact to substrate.

The protein belongs to the ribose 5-phosphate isomerase family. As to quaternary structure, homodimer.

It catalyses the reaction aldehydo-D-ribose 5-phosphate = D-ribulose 5-phosphate. It functions in the pathway carbohydrate degradation; pentose phosphate pathway; D-ribose 5-phosphate from D-ribulose 5-phosphate (non-oxidative stage): step 1/1. Catalyzes the reversible conversion of ribose-5-phosphate to ribulose 5-phosphate. This Lactobacillus gasseri (strain ATCC 33323 / DSM 20243 / BCRC 14619 / CIP 102991 / JCM 1131 / KCTC 3163 / NCIMB 11718 / NCTC 13722 / AM63) protein is Ribose-5-phosphate isomerase A.